The following is a 202-amino-acid chain: Biogenesis of lysosome-related organelles complex 1 subunit 3 (202 aa).

Residues 1-11 (MASQGRRRRPL) show a composition bias toward basic residues. Positions 1 to 82 (MASQGRRRRP…PTAAPRDLPP (82 aa)) are disordered. Positions 41-55 (LGPSGPTRGRPTGLR) are enriched in low complexity. A compositionally biased stretch (acidic residues) spans 61-71 (AETDSEPEPEP). Threonine 63 is subject to Phosphothreonine. A Phosphoserine modification is found at serine 65.

Belongs to the BLOC1S3 family. As to quaternary structure, interacts with BLOC1S4, BLOC1S5 and BLOC1S6. Component of the biogenesis of lysosome-related organelles complex 1 (BLOC-1) composed of BLOC1S1, BLOC1S2, BLOC1S3, BLOC1S4, BLOC1S5, BLOC1S6, DTNBP1/BLOC1S7 and SNAPIN/BLOC1S8. Octamer composed of one copy each BLOC1S1, BLOC1S2, BLOC1S3, BLOC1S4, BLOC1S5, BLOC1S6, DTNBP1/BLOC1S7 and SNAPIN/BLOC1S8. The BLOC-1 complex associates with the AP-3 protein complex and membrane protein cargos. Interacts directly with BLOC1S2.

The protein resides in the cytoplasm. Functionally, component of the BLOC-1 complex, a complex that is required for normal biogenesis of lysosome-related organelles (LRO), such as platelet dense granules and melanosomes. In concert with the AP-3 complex, the BLOC-1 complex is required to target membrane protein cargos into vesicles assembled at cell bodies for delivery into neurites and nerve terminals. The BLOC-1 complex, in association with SNARE proteins, is also proposed to be involved in neurite extension. Plays a role in intracellular vesicle trafficking. The sequence is that of Biogenesis of lysosome-related organelles complex 1 subunit 3 (BLOC1S3) from Homo sapiens (Human).